The following is a 378-amino-acid chain: MAFVEQEELIAIRRQLHQIPEIGLEEKETQAFLLNEIDKMKQPYLQVRTWQTGILVFIEGKNPQKTIGWRADIDGLPIQEEVVSAFQSKRPGFMHACGHDFHMTIGLGVLKELSQQQPDNNFLFLFQPAEENEAGGMLMYEDHAFGEWLPDEFYALHVNPDLPVGTISTRVGTLFAATCEVNITLKGKGGHAAFPHQANDMVLAATNLIQQAQTIVSRNVDPVVGAVVTFGTFHAGTACNVIAEEATLSGTIRTLTAETNEQTQRRIREISEGIAQSFQCEVTVHLDQKGYLPVVNEPACTTNFIEYMSKQATVQFQQAPVAMTGEDFGYLLSKVPGTMFWLGVASPYSLHSAKFEPNEEALLFGVEAVSGFLKSLDN.

Residue Asp-72 is part of the active site. The active-site Proton acceptor is Glu-131.

Belongs to the peptidase M20A family. N-acetyldiaminopimelate deacetylase subfamily.

It catalyses the reaction N-acetyl-(2S,6S)-2,6-diaminopimelate + H2O = (2S,6S)-2,6-diaminopimelate + acetate. The protein operates within amino-acid biosynthesis; L-lysine biosynthesis via DAP pathway; LL-2,6-diaminopimelate from (S)-tetrahydrodipicolinate (acetylase route): step 3/3. Its function is as follows. Catalyzes the conversion of N-acetyl-diaminopimelate to diaminopimelate and acetate. The chain is N-acetyldiaminopimelate deacetylase from Enterococcus faecalis (strain ATCC 700802 / V583).